Here is a 171-residue protein sequence, read N- to C-terminus: Large ribosomal subunit protein uL10 (171 aa).

Belongs to the universal ribosomal protein uL10 family. As to quaternary structure, part of the ribosomal stalk of the 50S ribosomal subunit. The N-terminus interacts with L11 and the large rRNA to form the base of the stalk. The C-terminus forms an elongated spine to which L12 dimers bind in a sequential fashion forming a multimeric L10(L12)X complex.

Functionally, forms part of the ribosomal stalk, playing a central role in the interaction of the ribosome with GTP-bound translation factors. The sequence is that of Large ribosomal subunit protein uL10 from Corynebacterium efficiens (strain DSM 44549 / YS-314 / AJ 12310 / JCM 11189 / NBRC 100395).